The following is a 221-amino-acid chain: Iron-sulfur cluster repair protein YtfE (221 aa).

It belongs to the RIC family. YtfE subfamily. In terms of assembly, homodimer.

It localises to the cytoplasm. Functionally, di-iron-containing protein involved in the repair of iron-sulfur clusters damaged by oxidative and nitrosative stress conditions. The protein is Iron-sulfur cluster repair protein YtfE of Dickeya chrysanthemi (strain Ech1591) (Dickeya zeae (strain Ech1591)).